The chain runs to 207 residues: Probable RNA 2'-phosphotransferase (207 aa).

It belongs to the KptA/TPT1 family.

Its function is as follows. Removes the 2'-phosphate from RNA via an intermediate in which the phosphate is ADP-ribosylated by NAD followed by a presumed transesterification to release the RNA and generate ADP-ribose 1''-2''-cyclic phosphate (APPR&gt;P). May function as an ADP-ribosylase. This is Probable RNA 2'-phosphotransferase from Methanosarcina mazei (strain ATCC BAA-159 / DSM 3647 / Goe1 / Go1 / JCM 11833 / OCM 88) (Methanosarcina frisia).